The following is a 268-amino-acid chain: Tryptophan synthase alpha chain (268 aa).

Residues E49 and D60 each act as proton acceptor in the active site.

The protein belongs to the TrpA family. In terms of assembly, tetramer of two alpha and two beta chains.

The enzyme catalyses (1S,2R)-1-C-(indol-3-yl)glycerol 3-phosphate + L-serine = D-glyceraldehyde 3-phosphate + L-tryptophan + H2O. The protein operates within amino-acid biosynthesis; L-tryptophan biosynthesis; L-tryptophan from chorismate: step 5/5. The alpha subunit is responsible for the aldol cleavage of indoleglycerol phosphate to indole and glyceraldehyde 3-phosphate. The protein is Tryptophan synthase alpha chain of Yersinia pseudotuberculosis serotype O:1b (strain IP 31758).